The chain runs to 201 residues: Receptor expression-enhancing protein 1 (201 aa).

A run of 2 helical transmembrane segments spans residues 1–21 (MVSW…YPAY) and 35–55 (YVKW…ETFT). At Ser152 the chain carries Phosphoserine. The interval 158-201 (TIRGDGAPAPSGPPPPGTGRSSGKHSQPKMSRSASESAGSSGTA) is disordered. Residues 188–201 (SRSASESAGSSGTA) are compositionally biased toward low complexity.

This sequence belongs to the DP1 family. As to quaternary structure, interacts with OLFR992. Interacts with SPAST and ATL1. Interacts (via C-terminus) with microtubules. Interacts with ZFYVE27. In terms of tissue distribution, detected in olfactory sensory neurons of the olfactory epithelium, and in total brain.

Its subcellular location is the membrane. It localises to the mitochondrion membrane. The protein localises to the endoplasmic reticulum. Its function is as follows. Required for endoplasmic reticulum (ER) network formation, shaping and remodeling; it links ER tubules to the cytoskeleton. May also enhance the cell surface expression of odorant receptors. This chain is Receptor expression-enhancing protein 1 (Reep1), found in Mus musculus (Mouse).